A 685-amino-acid polypeptide reads, in one-letter code: Threonine--tRNA ligase (685 aa).

A disordered region spans residues 1–28 (MTSPAPEHSAAPLRVPAGTTAGTAVREA). The TGS domain occupies 1-65 (MTSPAPEHSA…EVDVDVEPVA (65 aa)). Residues 262–568 (DHRKLGTELD…LTEHYAGAFP (307 aa)) are catalytic. 3 residues coordinate Zn(2+): C367, H418, and H545.

The protein belongs to the class-II aminoacyl-tRNA synthetase family. In terms of assembly, homodimer. Requires Zn(2+) as cofactor.

It is found in the cytoplasm. The enzyme catalyses tRNA(Thr) + L-threonine + ATP = L-threonyl-tRNA(Thr) + AMP + diphosphate + H(+). In terms of biological role, catalyzes the attachment of threonine to tRNA(Thr) in a two-step reaction: L-threonine is first activated by ATP to form Thr-AMP and then transferred to the acceptor end of tRNA(Thr). Also edits incorrectly charged L-seryl-tRNA(Thr). The protein is Threonine--tRNA ligase of Rhodococcus erythropolis (strain PR4 / NBRC 100887).